A 248-amino-acid chain; its full sequence is Probable transcriptional regulatory protein RHE_CH03475 (248 aa).

Belongs to the TACO1 family.

It is found in the cytoplasm. The sequence is that of Probable transcriptional regulatory protein RHE_CH03475 from Rhizobium etli (strain ATCC 51251 / DSM 11541 / JCM 21823 / NBRC 15573 / CFN 42).